Reading from the N-terminus, the 145-residue chain is Pseudoazurin (145 aa).

The first 22 residues, 1-22, serve as a signal peptide directing secretion; the sequence is MFHHSLAAAAAALLALAAPGFA. Residues 27–115 enclose the Plastocyanin-like domain; the sequence is VHMLNKGESG…MGMVGLVQVG (89 aa). His-62, Cys-100, His-103, and Met-108 together coordinate Cu cation. A disordered region spans residues 126–145; the sequence is TAKMPKKARERMDAELAQVN.

Homodimer. It depends on Cu cation as a cofactor.

Its subcellular location is the periplasm. This soluble electron transfer copper protein is required for the inactivation of copper-containing nitrite reductase in the presence of oxygen. This is Pseudoazurin (pazS) from Paracoccus pantotrophus (Thiosphaera pantotropha).